Consider the following 203-residue polypeptide: 5-formyltetrahydrofolate cyclo-ligase (203 aa).

The residue at position 2 (Ala-2) is an N-acetylalanine. Residues 10 to 14 and Arg-14 each bind ATP; that span reads KRSLR. Substrate contacts are provided by residues Leu-56, Glu-61, and 148–152; that span reads RGKGY. 145–153 is an ATP binding site; the sequence is RLGRGKGYY. The Mg(2+) site is built by Asp-154 and Asp-189.

It belongs to the 5-formyltetrahydrofolate cyclo-ligase family. As to quaternary structure, monomer. Requires Mg(2+) as cofactor.

Its subcellular location is the cytoplasm. The enzyme catalyses (6S)-5-formyl-5,6,7,8-tetrahydrofolate + ATP = (6R)-5,10-methenyltetrahydrofolate + ADP + phosphate. Its function is as follows. Contributes to tetrahydrofolate metabolism. Helps regulate carbon flow through the folate-dependent one-carbon metabolic network that supplies carbon for the biosynthesis of purines, thymidine and amino acids. Catalyzes the irreversible conversion of 5-formyltetrahydrofolate (5-FTHF) to yield 5,10-methenyltetrahydrofolate. The protein is 5-formyltetrahydrofolate cyclo-ligase (MTHFS) of Homo sapiens (Human).